The sequence spans 37 residues: Large ribosomal subunit protein bL36c (37 aa).

Belongs to the bacterial ribosomal protein bL36 family.

It localises to the plastid. Its subcellular location is the cyanelle. This Cyanophora paradoxa protein is Large ribosomal subunit protein bL36c (rpl36).